The sequence spans 159 residues: Major latex protein 146 (159 aa).

This sequence belongs to the MLP family. As to expression, laticifer.

The protein resides in the vacuole. It localises to the cytoplasmic vesicle. In terms of biological role, not known; MLPs constitute up to 50% of the soluble latex protein. The protein is Major latex protein 146 (MLP146) of Papaver somniferum (Opium poppy).